A 121-amino-acid polypeptide reads, in one-letter code: Large ribosomal subunit protein bL12 (121 aa).

Belongs to the bacterial ribosomal protein bL12 family. Homodimer. Part of the ribosomal stalk of the 50S ribosomal subunit. Forms a multimeric L10(L12)X complex, where L10 forms an elongated spine to which 2 to 4 L12 dimers bind in a sequential fashion. Binds GTP-bound translation factors.

In terms of biological role, forms part of the ribosomal stalk which helps the ribosome interact with GTP-bound translation factors. Is thus essential for accurate translation. This is Large ribosomal subunit protein bL12 from Streptococcus agalactiae serotype V (strain ATCC BAA-611 / 2603 V/R).